We begin with the raw amino-acid sequence, 430 residues long: Tryptophan synthase beta chain (430 aa).

K95 is subject to N6-(pyridoxal phosphate)lysine.

This sequence belongs to the TrpB family. As to quaternary structure, tetramer of two alpha and two beta chains. Pyridoxal 5'-phosphate serves as cofactor.

The catalysed reaction is (1S,2R)-1-C-(indol-3-yl)glycerol 3-phosphate + L-serine = D-glyceraldehyde 3-phosphate + L-tryptophan + H2O. It functions in the pathway amino-acid biosynthesis; L-tryptophan biosynthesis; L-tryptophan from chorismate: step 5/5. In terms of biological role, the beta subunit is responsible for the synthesis of L-tryptophan from indole and L-serine. The protein is Tryptophan synthase beta chain of Halobacterium salinarum (strain ATCC 29341 / DSM 671 / R1).